The chain runs to 187 residues: Frequenin-1 (187 aa).

A lipid anchor (N-myristoyl glycine) is attached at Gly2. 4 consecutive EF-hand domains span residues 24-59 (EKEI…FPQG), 60-95 (DPSK…TSKG), 96-131 (NLDE…IYQM), and 143-178 (TPQK…DPRI). Residues Asp73, Asn75, Asp77, Ser79, Glu84, Asp109, Asp111, Asp113, Tyr115, Glu120, Asp156, Asn158, Asp160, Lys162, and Glu167 each coordinate Ca(2+).

Belongs to the recoverin family. As to quaternary structure, in contrast to Frq2, does not interact with ric8a. In terms of tissue distribution, enriched in synapses, such as the motor nerve endings at neuromuscular junctions. In the embryo, highly expressed in the ventral ganglia.

The protein resides in the cytoplasm. Ca(2+)-dependent modulation of synaptic efficacy. Also plays a role in axon terminal morphology. In Drosophila melanogaster (Fruit fly), this protein is Frequenin-1 (Frq1).